Consider the following 366-residue polypeptide: Ferredoxin--NADP reductase, leaf isozyme 2, chloroplastic (366 aa).

Residues 1-48 (MAAVNTVSSLPCSKAGAAVAGGAPRPSTCSVFYPPRCWSKRSSGNGVR) constitute a chloroplast transit peptide. The 123-residue stretch at 87 to 209 (KEPYTGRCLL…TGPVGKEMLM (123 aa)) folds into the FAD-binding FR-type domain. Residues 145-148 (RLYS), 166-168 (CVK), Tyr172, and 183-185 (VCS) contribute to the FAD site. NADP(+) is bound by residues Ser148 and Lys168. A disulfide bridge connects residues Cys184 and Cys189. Ser185 is subject to Phosphoserine. A Phosphothreonine modification is found at Thr216. Thr224 contributes to the FAD binding site. Residues Thr224, 256–257 (VP), 286–287 (SR), Lys296, 325–326 (GL), and Glu364 contribute to the NADP(+) site.

This sequence belongs to the ferredoxin--NADP reductase type 1 family. As to quaternary structure, heterodimer with LFNR1. Component of high molecular weight thylakoid LFNRs-containing protein complexes containing LIR1, LFNR1, LFNR2, TIC62 and TROL proteins. Interacts directly with LFNR1 and LFNR2; LIR1 increases the affinity of LFNR1 and LFNR2 for TIC62 and subsequent thylakoid relocalization. FAD is required as a cofactor. In terms of processing, may form interchain disulfide bonds with LIR1.

The protein localises to the plastid. The protein resides in the chloroplast stroma. It localises to the chloroplast thylakoid membrane. It catalyses the reaction 2 reduced [2Fe-2S]-[ferredoxin] + NADP(+) + H(+) = 2 oxidized [2Fe-2S]-[ferredoxin] + NADPH. It participates in energy metabolism; photosynthesis. Plays a key role in regulating the relative amounts of cyclic and non-cyclic electron flow to meet the demands of the plant for ATP and reducing power. This is Ferredoxin--NADP reductase, leaf isozyme 2, chloroplastic from Oryza sativa subsp. indica (Rice).